The sequence spans 962 residues: Probable transport protein MmpL9 (962 aa).

12 consecutive transmembrane segments (helical) span residues 25–45 (LAAI…SVAV), 201–223 (LITG…SIAT), 225–247 (LLIL…FLGY), 256–276 (FVVN…AIFL), 302–322 (ANVI…LSFA), 335–355 (AIGM…IIAI), 383–403 (WPGP…LALP), 768–788 (YDIL…MLMI), 796–816 (LVIV…SVLI), 820–840 (FVGL…LLAV), 867–887 (AMAG…FTMA), and 895–915 (RVIG…TLVV).

Belongs to the resistance-nodulation-cell division (RND) (TC 2.A.6) family. MmpL subfamily.

The protein resides in the cell membrane. The polypeptide is Probable transport protein MmpL9 (mmpL9) (Mycobacterium tuberculosis (strain ATCC 25618 / H37Rv)).